An 859-amino-acid polypeptide reads, in one-letter code: Leucine--tRNA ligase (859 aa).

The short motif at proline 42–histidine 52 is the 'HIGH' region element. The short motif at lysine 618–serine 622 is the 'KMSKS' region element. Lysine 621 serves as a coordination point for ATP.

The protein belongs to the class-I aminoacyl-tRNA synthetase family.

It localises to the cytoplasm. It carries out the reaction tRNA(Leu) + L-leucine + ATP = L-leucyl-tRNA(Leu) + AMP + diphosphate. The protein is Leucine--tRNA ligase of Shewanella woodyi (strain ATCC 51908 / MS32).